A 251-amino-acid chain; its full sequence is Probable transcriptional regulatory protein RSal33209_2002 (251 aa).

The protein belongs to the TACO1 family.

It is found in the cytoplasm. This Renibacterium salmoninarum (strain ATCC 33209 / DSM 20767 / JCM 11484 / NBRC 15589 / NCIMB 2235) protein is Probable transcriptional regulatory protein RSal33209_2002.